We begin with the raw amino-acid sequence, 294 residues long: Bidirectional sugar transporter SWEET13 (294 aa).

The Extracellular segment spans residues 1–7 (MALTNNL). Residues 8–28 (WAFVFGILGNIISFVVFLAPV) form a helical membrane-spanning segment. One can recognise a MtN3/slv 1 domain in the interval 10 to 97 (FVFGILGNII…VLFVSYANKK (88 aa)). Residues 29 to 42 (PTFVRICKKKSTEG) are Cytoplasmic-facing. A helical transmembrane segment spans residues 43–63 (FQSLPYVSALFSAMLWIYYAM). At 64–69 (QKDGTA) the chain is on the extracellular side. A helical membrane pass occupies residues 70-90 (FLLITINAFGCVIETIYIVLF). Over 91–104 (VSYANKKTRISTLK) the chain is Cytoplasmic. The helical transmembrane segment at 105 to 125 (VLGLLNFLGFAAIVLVCELLT) threads the bilayer. Residues 126 to 132 (KGSTREK) lie on the Extracellular side of the membrane. A helical membrane pass occupies residues 133 to 153 (VLGGICVGFSVSVFAAPLSIM). Residues 133 to 216 (VLGGICVGFS…MILYIIFKYY (84 aa)) enclose the MtN3/slv 2 domain. Over 154 to 166 (RVVVRTRSVEFMP) the chain is Cytoplasmic. The chain crosses the membrane as a helical span at residues 167 to 187 (FSLSLFLTISAVTWLFYGLAI). Residues 188-192 (KDFYV) are Extracellular-facing. A helical membrane pass occupies residues 193-213 (ALPNVLGAFLGAVQMILYIIF). Residues 214–294 (KYYKTPVAQK…NKDVQKQSQV (81 aa)) lie on the Cytoplasmic side of the membrane. The disordered stretch occupies residues 273 to 294 (KSQNMTDPKDQINKDVQKQSQV). The segment covering 279-294 (DPKDQINKDVQKQSQV) has biased composition (basic and acidic residues).

The protein belongs to the SWEET sugar transporter family. As to quaternary structure, forms heterooligomers with SWEET1, SWEET3, SWEET6, SWEET7, SWEET8, SWEET9, SWEET11 and SWEET17. Expressed at low levels in leaves.

The protein resides in the cell membrane. Functionally, mediates both low-affinity uptake and efflux of sugar across the plasma membrane. Involved in nurturing the male gametophyte. The polypeptide is Bidirectional sugar transporter SWEET13 (Arabidopsis thaliana (Mouse-ear cress)).